Reading from the N-terminus, the 406-residue chain is Cysteine desulfurase (406 aa).

At K226 the chain carries N6-(pyridoxal phosphate)lysine. C364 serves as the catalytic Cysteine persulfide intermediate.

It belongs to the class-V pyridoxal-phosphate-dependent aminotransferase family. Csd subfamily. Homodimer. Interacts with SufE and the SufBCD complex composed of SufB, SufC and SufD. The interaction with SufE is required to mediate the direct transfer of the sulfur atom from the S-sulfanylcysteine. Pyridoxal 5'-phosphate serves as cofactor.

It localises to the cytoplasm. It catalyses the reaction (sulfur carrier)-H + L-cysteine = (sulfur carrier)-SH + L-alanine. The catalysed reaction is L-selenocysteine + AH2 = hydrogenselenide + L-alanine + A + H(+). The protein operates within cofactor biosynthesis; iron-sulfur cluster biosynthesis. In terms of biological role, cysteine desulfurases mobilize the sulfur from L-cysteine to yield L-alanine, an essential step in sulfur metabolism for biosynthesis of a variety of sulfur-containing biomolecules. Component of the suf operon, which is activated and required under specific conditions such as oxidative stress and iron limitation. Acts as a potent selenocysteine lyase in vitro, that mobilizes selenium from L-selenocysteine. Selenocysteine lyase activity is however unsure in vivo. This chain is Cysteine desulfurase, found in Escherichia coli O8 (strain IAI1).